Reading from the N-terminus, the 393-residue chain is 1-deoxy-D-xylulose 5-phosphate reductoisomerase (393 aa).

The NADPH site is built by Thr-10, Gly-11, Ser-12, Ile-13, Arg-37, Gln-38, and Asn-124. Lys-125 lines the 1-deoxy-D-xylulose 5-phosphate pocket. Residue Glu-126 participates in NADPH binding. Residue Asp-150 participates in Mn(2+) binding. Ser-151, Glu-152, Ser-179, and His-202 together coordinate 1-deoxy-D-xylulose 5-phosphate. Position 152 (Glu-152) interacts with Mn(2+). An NADPH-binding site is contributed by Gly-208. Residues Ser-215, Asn-220, Lys-221, and Glu-224 each coordinate 1-deoxy-D-xylulose 5-phosphate. Residue Glu-224 coordinates Mn(2+).

This sequence belongs to the DXR family. The cofactor is Mg(2+). Mn(2+) serves as cofactor.

It catalyses the reaction 2-C-methyl-D-erythritol 4-phosphate + NADP(+) = 1-deoxy-D-xylulose 5-phosphate + NADPH + H(+). Its pathway is isoprenoid biosynthesis; isopentenyl diphosphate biosynthesis via DXP pathway; isopentenyl diphosphate from 1-deoxy-D-xylulose 5-phosphate: step 1/6. In terms of biological role, catalyzes the NADPH-dependent rearrangement and reduction of 1-deoxy-D-xylulose-5-phosphate (DXP) to 2-C-methyl-D-erythritol 4-phosphate (MEP). The chain is 1-deoxy-D-xylulose 5-phosphate reductoisomerase from Cupriavidus taiwanensis (strain DSM 17343 / BCRC 17206 / CCUG 44338 / CIP 107171 / LMG 19424 / R1) (Ralstonia taiwanensis (strain LMG 19424)).